The following is a 2570-amino-acid chain: Highly reducing polyketide synthase tstA (2570 aa).

The 428-residue stretch at 16 to 443 folds into the Ketosynthase family 3 (KS3) domain; the sequence is AMPIAVVGIG…GANAHVVLEN (428 aa). Residues Cys-191, His-326, and His-366 each act as for beta-ketoacyl synthase activity in the active site. Positions 458–478 are disordered; sequence HTRKSATESSGTSTPSNPGPH. Low complexity predominate over residues 464 to 478; that stretch reads TESSGTSTPSNPGPH. Positions 567–898 constitute a Malonyl-CoA:ACP transacylase (MAT) domain; it reads FVFTGQGAQW…YSALVRNKNA (332 aa). Positions 965 to 1103 are N-terminal hotdog fold; that stretch reads TDLLGVLERN…GLVSVVAPQK (139 aa). A PKS/mFAS DH domain is found at 965–1293; it reads TDLLGVLERN…CATLAREGAD (329 aa). The Proton acceptor; for dehydratase activity role is filled by His-997. Residues 1133–1293 form a C-terminal hotdog fold region; the sequence is RRNINVPQFY…CATLAREGAD (161 aa). Asp-1198 functions as the Proton donor; for dehydratase activity in the catalytic mechanism. The segment at 1343–1645 is methyltransferase (CMeT) domain; it reads LERAAYYMLK…IATSINSNNY (303 aa). Positions 1866-2178 constitute an Enoyl reductase (ER) domain; that stretch reads GLLDSIFWTD…TGGHMGKLVG (313 aa). In terms of domain architecture, Ketoreductase (KR) spans 2202 to 2379; that stretch reads ASYVLIGGLG…ATTIDLGAIS (178 aa). In terms of domain architecture, Carrier spans 2482 to 2559; that stretch reads DASELILGAL…HLATKIAQRS (78 aa). O-(pantetheine 4'-phosphoryl)serine is present on Ser-2519.

Requires pantetheine 4'-phosphate as cofactor.

It participates in secondary metabolite biosynthesis. Its function is as follows. Highly reducing polyketide synthase; part of the gene cluster that mediates the biosynthesis of the antihypercholesterolemic agents phomoidrides which are dimeric anhydrides. The pathway begins with the highly reducing polyketide synthase tstA that catalyzes the formation of a C12-fatty acyl-ACP, starting from one acetate and 5 malonate units. The hydrolase tstM is involved in the release of the C12-fatty acyl chain from tstA. The alkylcitrate synthase (ACS) tstJ and the alkylcitrate dehydratase (ACDH) tstI then give rise to decarboxylated monomeric anhydrides by coupling the C12-fatty acyl chain with oxalacetic acid. The cyclase tstC is responsible for the dimerization of the monomeric anhydrides which leads to the production of prephomoidride that contains the characteristic bicyclo[4.3.1]deca-1,6-diene system of phomoidrides. Iterative oxidation catalyzed by the alpha-ketoglutarate-dependent dioxygenase tstK produced then phomoidride A. Finally, the methyltransferase tstE converts phomoidride A to phomoidride B via an acetalization reaction. The phosphatidylethanolamine-binding protein tstB and tstN are not essential for dimerization and their functions have still to be determined. The polypeptide is Highly reducing polyketide synthase tstA (Talaromyces stipitatus (strain ATCC 10500 / CBS 375.48 / QM 6759 / NRRL 1006) (Penicillium stipitatum)).